We begin with the raw amino-acid sequence, 118 residues long: Large ribosomal subunit protein uL18 (118 aa).

This sequence belongs to the universal ribosomal protein uL18 family. Part of the 50S ribosomal subunit; part of the 5S rRNA/L5/L18/L25 subcomplex. Contacts the 5S and 23S rRNAs.

This is one of the proteins that bind and probably mediate the attachment of the 5S RNA into the large ribosomal subunit, where it forms part of the central protuberance. This chain is Large ribosomal subunit protein uL18, found in Phenylobacterium zucineum (strain HLK1).